The chain runs to 1912 residues: Protein javelin (1912 aa).

10 disordered regions span residues 1–32 (MGNG…QHNY), 89–145 (GTGL…VGGA), 298–377 (RSRH…HRLS), 460–515 (QSRR…SLSE), 545–586 (TTRT…TLRQ), 764–920 (SYNQ…EAPV), 965–1010 (IQEN…GKPL), 1257–1297 (GINS…GGAA), 1486–1507 (EQQE…QYED), and 1881–1912 (YDPS…DDKM). Basic residues-rich tracts occupy residues 97–133 (QQLH…HPHA) and 299–313 (SRHK…KKPP). A compositionally biased stretch (polar residues) spans 339 to 354 (ADDTQSQRSNSATCDS). Residues 355 to 374 (HQQQQQQQHQPQQQHQQQQH) show a composition bias toward low complexity. Positions 489 to 498 (EHSQSSVFPE) are enriched in polar residues. Residues 499–512 (TTTSNSDDQTDSPS) are compositionally biased toward low complexity. Over residues 553–566 (SEEGEEEQTGEEVV) the composition is skewed to acidic residues. The span at 568–586 (SLTTPTEPQTSDSESTLRQ) shows a compositional bias: polar residues. Basic and acidic residues-rich tracts occupy residues 772-792 (QRKE…DSIR) and 802-869 (RQRE…RKEE). Acidic residues predominate over residues 890 to 904 (SQQEDTVADVEEEDN). Over residues 965–979 (IQENKETSQRIEPKP) the composition is skewed to basic and acidic residues. Low complexity predominate over residues 981–990 (PKTNSNSSST). Acidic residues-rich tracts occupy residues 1494–1507 (LEEE…QYED) and 1903–1912 (ELYDSLDDKM).

It localises to the cytoplasm. Its subcellular location is the cytoskeleton. In terms of biological role, important for normal assembly of actin bundles during bristle formation. This chain is Protein javelin, found in Drosophila melanogaster (Fruit fly).